We begin with the raw amino-acid sequence, 539 residues long: 3-methylmercaptopropionyl-CoA ligase (539 aa).

Thr-185 lines the Mg(2+) pocket. His-231, Gly-303, His-324, Ala-325, and Ser-329 together coordinate ATP. A Mg(2+)-binding site is contributed by Glu-330. Residues Gln-359, Asp-417, Arg-432, and Lys-523 each coordinate ATP.

Belongs to the ATP-dependent AMP-binding enzyme family. Homodimer. Mg(2+) is required as a cofactor.

The catalysed reaction is 3-(methylsulfanyl)propanoate + ATP + CoA = 3-(methylsulfanyl)propanoyl-CoA + AMP + diphosphate. The protein operates within lipid metabolism; fatty acid metabolism. Activated by LiCl and NH(4)Cl. Inhibited by dimethylsulfoniopropionate (DMSP). MMPA concentrations above 2 mM relieve the DMSP inhibition and 80% of activity is regained at an MMPA concentration of 8 mM. Involved in the assimilation of dimethylsulphoniopropionate (DMSP), an important compound in the fixation of carbon in marine phytoplankton. Catalyzes the ATP-dependent ligation of methylmercaptopropionate (MMPA) and CoA to yield methylmercaptopropionate-CoA (MMPA-CoA). It is also active with short-chain-fatty-acid (carboxylic acids up to six carbons in length). This Ruegeria pomeroyi (strain ATCC 700808 / DSM 15171 / DSS-3) (Silicibacter pomeroyi) protein is 3-methylmercaptopropionyl-CoA ligase.